Reading from the N-terminus, the 151-residue chain is FAD synthase (151 aa).

Residues Thr12–Phe13, His17–His20, Asp97, and Tyr125 contribute to the ATP site.

Belongs to the archaeal FAD synthase family. As to quaternary structure, homodimer. A divalent metal cation serves as cofactor.

The catalysed reaction is FMN + ATP + H(+) = FAD + diphosphate. The protein operates within cofactor biosynthesis; FAD biosynthesis; FAD from FMN: step 1/1. Catalyzes the transfer of the AMP portion of ATP to flavin mononucleotide (FMN) to produce flavin adenine dinucleotide (FAD) coenzyme. This is FAD synthase from Methanocaldococcus sp. (strain FS406-22).